The chain runs to 44 residues: uncharacterized protein (44 aa).

This is an uncharacterized protein from Methanocaldococcus jannaschii (strain ATCC 43067 / DSM 2661 / JAL-1 / JCM 10045 / NBRC 100440) (Methanococcus jannaschii).